The sequence spans 594 residues: Cytoplasmic polyadenylation element-binding protein 1 (594 aa).

The segment at 1-33 (MQHQVKACGDSKSTTRSLQGNRRSGAASLKKPS) is disordered. The segment covering 11–22 (SKSTTRSLQGNR) has biased composition (polar residues). 2 consecutive RRM domains span residues 257 to 364 (RKVF…PWRL) and 381 to 452 (RTVF…HAET). The tract at residues 519 to 560 (TGDQTRILPRPPHHQSSHYSPRSHQMMNHDSMESSNQSRGNT) is disordered. Residues 535 to 560 (SHYSPRSHQMMNHDSMESSNQSRGNT) are compositionally biased toward polar residues.

In terms of assembly, interacts with fbf-1.

Cytoplasmic polyadenylation element binding protein that binds to and regulates the translation of specific mRNAs. Essential for progression through meiosis. Involved in spermatogenesis. The chain is Cytoplasmic polyadenylation element-binding protein 1 (cpb-1) from Caenorhabditis remanei (Caenorhabditis vulgaris).